Here is a 333-residue protein sequence, read N- to C-terminus: L-lactate dehydrogenase B chain (333 aa).

Residues 29–57 and arginine 99 contribute to the NAD(+) site; that span reads GQVG…LEDK. The substrate site is built by arginine 106, asparagine 138, and arginine 169. Residue asparagine 138 participates in NAD(+) binding. Histidine 193 functions as the Proton acceptor in the catalytic mechanism. Threonine 248 provides a ligand contact to substrate.

Belongs to the LDH/MDH superfamily. LDH family. Homotetramer.

The protein localises to the cytoplasm. It catalyses the reaction (S)-lactate + NAD(+) = pyruvate + NADH + H(+). It functions in the pathway fermentation; pyruvate fermentation to lactate; (S)-lactate from pyruvate: step 1/1. In terms of biological role, interconverts simultaneously and stereospecifically pyruvate and lactate with concomitant interconversion of NADH and NAD(+). This Gallus gallus (Chicken) protein is L-lactate dehydrogenase B chain (LDHB).